Reading from the N-terminus, the 247-residue chain is Ribonuclease 3 (247 aa).

One can recognise an RNase III domain in the interval F21 to G149. Position 62 (E62) interacts with Mg(2+). D66 is a catalytic residue. Mg(2+) contacts are provided by N135 and E138. Residue E138 is part of the active site. The DRBM domain occupies D176 to R245.

The protein belongs to the ribonuclease III family. In terms of assembly, homodimer. It depends on Mg(2+) as a cofactor.

It is found in the cytoplasm. The catalysed reaction is Endonucleolytic cleavage to 5'-phosphomonoester.. Digests double-stranded RNA. Involved in the processing of primary rRNA transcript to yield the immediate precursors to the large and small rRNAs (23S and 16S). Processes some mRNAs, and tRNAs when they are encoded in the rRNA operon. Processes pre-crRNA and tracrRNA of type II CRISPR loci if present in the organism. This Leptospira borgpetersenii serovar Hardjo-bovis (strain L550) protein is Ribonuclease 3.